A 322-amino-acid polypeptide reads, in one-letter code: Phosphatidylserine decarboxylase proenzyme (322 aa).

Active-site charge relay system; for autoendoproteolytic cleavage activity residues include Asp-90, His-147, and Ser-254. The Schiff-base intermediate with substrate; via pyruvic acid; for decarboxylase activity role is filled by Ser-254. Pyruvic acid (Ser); by autocatalysis is present on Ser-254. Positions 293 to 322 are disordered; that stretch reads PDAEPAPLPAEEIEAEHDASPLVDDKKDQV. Basic and acidic residues predominate over residues 308 to 322; that stretch reads EHDASPLVDDKKDQV.

This sequence belongs to the phosphatidylserine decarboxylase family. PSD-B subfamily. Prokaryotic type I sub-subfamily. As to quaternary structure, heterodimer of a large membrane-associated beta subunit and a small pyruvoyl-containing alpha subunit. It depends on pyruvate as a cofactor. Is synthesized initially as an inactive proenzyme. Formation of the active enzyme involves a self-maturation process in which the active site pyruvoyl group is generated from an internal serine residue via an autocatalytic post-translational modification. Two non-identical subunits are generated from the proenzyme in this reaction, and the pyruvate is formed at the N-terminus of the alpha chain, which is derived from the carboxyl end of the proenzyme. The autoendoproteolytic cleavage occurs by a canonical serine protease mechanism, in which the side chain hydroxyl group of the serine supplies its oxygen atom to form the C-terminus of the beta chain, while the remainder of the serine residue undergoes an oxidative deamination to produce ammonia and the pyruvoyl prosthetic group on the alpha chain. During this reaction, the Ser that is part of the protease active site of the proenzyme becomes the pyruvoyl prosthetic group, which constitutes an essential element of the active site of the mature decarboxylase.

The protein resides in the cell membrane. The enzyme catalyses a 1,2-diacyl-sn-glycero-3-phospho-L-serine + H(+) = a 1,2-diacyl-sn-glycero-3-phosphoethanolamine + CO2. It functions in the pathway phospholipid metabolism; phosphatidylethanolamine biosynthesis; phosphatidylethanolamine from CDP-diacylglycerol: step 2/2. Functionally, catalyzes the formation of phosphatidylethanolamine (PtdEtn) from phosphatidylserine (PtdSer). The polypeptide is Phosphatidylserine decarboxylase proenzyme (Escherichia coli O45:K1 (strain S88 / ExPEC)).